The following is a 260-amino-acid chain: Snake venom serine protease homolog (260 aa).

Residues 1-18 (MVLIRVLANLLILQLSYA) form the signal peptide. Residues 19–24 (QKASEL) constitute a propeptide that is removed on maturation. The 227-residue stretch at 25-251 (IIGGDECNIN…YTEWIRSIIA (227 aa)) folds into the Peptidase S1 domain. 6 disulfides stabilise this stretch: C31–C165, C52–C68, C100–C258, C144–C212, C176–C191, and C202–C227. A glycan (N-linked (GlcNAc...) asparagine) is linked at N83.

Belongs to the peptidase S1 family. Snake venom subfamily. Expressed by the venom gland.

It localises to the secreted. Functionally, snake venom serine protease homolog that may act in the hemostasis system of the prey. The polypeptide is Snake venom serine protease homolog (Bothrops jararacussu (Jararacussu)).